Reading from the N-terminus, the 747-residue chain is Pseudouridine-metabolizing bifunctional protein C1861.05 (747 aa).

The interval 1–379 is pseudouridine-5'-phosphate glycosidase; that stretch reads MLIVMNRGCR…KVSDKGVSSS (379 aa). Glu61 serves as the catalytic Proton donor; for PsiMP glycosidase activity. The substrate site is built by Lys123 and Val143. Asp175 contacts Mn(2+). A substrate-binding site is contributed by 177–179; sequence SAD. The active-site Nucleophile; for PsiMP glycosidase activity is the Lys196. The pseudouridine kinase stretch occupies residues 380-747; it reads KKKITETTSK…VNPEIKTLLK (368 aa).

The protein in the N-terminal section; belongs to the pseudouridine-5'-phosphate glycosidase family. In the C-terminal section; belongs to the carbohydrate kinase PfkB family. Mn(2+) serves as cofactor.

Its subcellular location is the cytoplasm. It carries out the reaction D-ribose 5-phosphate + uracil = psi-UMP + H2O. The catalysed reaction is pseudouridine + ATP = psi-UMP + ADP + H(+). Functionally, bifunctional enzyme that catalyzes the phosphorylation of pseudouridine to pseudouridine 5'-phosphate (PsiMP), and the reversible cleavage of pseudouridine 5'-phosphate to ribose 5-phosphate and uracil. Is involved in a pseudouridine degradation pathway. In Schizosaccharomyces pombe (strain 972 / ATCC 24843) (Fission yeast), this protein is Pseudouridine-metabolizing bifunctional protein C1861.05.